A 299-amino-acid chain; its full sequence is Acetylglutamate kinase (299 aa).

Substrate contacts are provided by residues 72 to 73 (GG), R94, and N196.

This sequence belongs to the acetylglutamate kinase family. ArgB subfamily.

Its subcellular location is the cytoplasm. It catalyses the reaction N-acetyl-L-glutamate + ATP = N-acetyl-L-glutamyl 5-phosphate + ADP. It participates in amino-acid biosynthesis; L-arginine biosynthesis; N(2)-acetyl-L-ornithine from L-glutamate: step 2/4. Catalyzes the ATP-dependent phosphorylation of N-acetyl-L-glutamate. The protein is Acetylglutamate kinase of Burkholderia mallei (strain NCTC 10247).